Consider the following 267-residue polypeptide: Tryptophan synthase alpha chain (267 aa).

Active-site proton acceptor residues include Glu-47 and Asp-58.

The protein belongs to the TrpA family. As to quaternary structure, tetramer of two alpha and two beta chains.

It catalyses the reaction (1S,2R)-1-C-(indol-3-yl)glycerol 3-phosphate + L-serine = D-glyceraldehyde 3-phosphate + L-tryptophan + H2O. It participates in amino-acid biosynthesis; L-tryptophan biosynthesis; L-tryptophan from chorismate: step 5/5. The alpha subunit is responsible for the aldol cleavage of indoleglycerol phosphate to indole and glyceraldehyde 3-phosphate. The polypeptide is Tryptophan synthase alpha chain (Prosthecochloris aestuarii (strain DSM 271 / SK 413)).